The following is a 434-amino-acid chain: Serine--tRNA ligase (434 aa).

An L-serine-binding site is contributed by 237–239 (TAE). Residue 268-270 (RAE) coordinates ATP. Glutamate 291 lines the L-serine pocket. 358-361 (EISS) lines the ATP pocket. Serine 393 provides a ligand contact to L-serine.

This sequence belongs to the class-II aminoacyl-tRNA synthetase family. Type-1 seryl-tRNA synthetase subfamily. As to quaternary structure, homodimer. The tRNA molecule binds across the dimer.

Its subcellular location is the cytoplasm. The catalysed reaction is tRNA(Ser) + L-serine + ATP = L-seryl-tRNA(Ser) + AMP + diphosphate + H(+). It catalyses the reaction tRNA(Sec) + L-serine + ATP = L-seryl-tRNA(Sec) + AMP + diphosphate + H(+). Its pathway is aminoacyl-tRNA biosynthesis; selenocysteinyl-tRNA(Sec) biosynthesis; L-seryl-tRNA(Sec) from L-serine and tRNA(Sec): step 1/1. In terms of biological role, catalyzes the attachment of serine to tRNA(Ser). Is also able to aminoacylate tRNA(Sec) with serine, to form the misacylated tRNA L-seryl-tRNA(Sec), which will be further converted into selenocysteinyl-tRNA(Sec). The sequence is that of Serine--tRNA ligase from Rhodopseudomonas palustris (strain BisB5).